The chain runs to 59 residues: Thrombostatin (59 aa).

4 disulfide bridges follow: Cys3/Cys22, Cys17/Cys37, Cys39/Cys51, and Cys52/Cys57. The Cell attachment site motif lies at 43 to 45 (RGD).

The protein belongs to the three-finger toxin family. Short-chain subfamily. Antiplatelet toxin sub-subfamily. In terms of tissue distribution, expressed by the venom gland.

The protein localises to the secreted. Its function is as follows. Inhibits ADP-induced platelet aggregation and inhibits the binding of purified platelet fibrinogen receptor alpha-IIb/beta-3 (ITGA2B/ITGB3) to immobilized fibrinogen. This is Thrombostatin from Dendroaspis angusticeps (Eastern green mamba).